The chain runs to 71 residues: Movement protein TGBp3 (71 aa).

Topologically, residues 1 to 4 are lumenal; it reads MWSD. A helical membrane pass occupies residues 5 to 27; sequence SLVSRICVPIIVVCTSIALLNVV. At 28–71 the chain is on the cytoplasmic side; it reads SFRSECSCVVHISGAAIDIRGCSFTPDFIEYAKTLRVFNHRYQE.

This sequence belongs to the Tymovirales TGBp3 protein family.

The protein resides in the host endoplasmic reticulum membrane. Its function is as follows. Plays a role in viral cell-to-cell propagation, by facilitating genome transport to neighboring plant cells through plasmosdesmata. May induce the formation of granular vesicles derived from the Endoplasmic reticulum, which align on actin filaments. The protein is Movement protein TGBp3 of Populus balsamifera (Balsam poplar).